Here is a 390-residue protein sequence, read N- to C-terminus: Dual-specificity RNA methyltransferase RlmN (390 aa).

The active-site Proton acceptor is the glutamate 110. Residues 116-355 form the Radical SAM core domain; it reads EADRATLCVS…VIIRKTRGDD (240 aa). A disulfide bond links cysteine 123 and cysteine 360. Cysteine 130, cysteine 134, and cysteine 137 together coordinate [4Fe-4S] cluster. S-adenosyl-L-methionine contacts are provided by residues 184–185, serine 216, 238–240, and asparagine 317; these read GE and SLH. The active-site S-methylcysteine intermediate is cysteine 360.

It belongs to the radical SAM superfamily. RlmN family. It depends on [4Fe-4S] cluster as a cofactor.

The protein localises to the cytoplasm. It carries out the reaction adenosine(2503) in 23S rRNA + 2 reduced [2Fe-2S]-[ferredoxin] + 2 S-adenosyl-L-methionine = 2-methyladenosine(2503) in 23S rRNA + 5'-deoxyadenosine + L-methionine + 2 oxidized [2Fe-2S]-[ferredoxin] + S-adenosyl-L-homocysteine. The catalysed reaction is adenosine(37) in tRNA + 2 reduced [2Fe-2S]-[ferredoxin] + 2 S-adenosyl-L-methionine = 2-methyladenosine(37) in tRNA + 5'-deoxyadenosine + L-methionine + 2 oxidized [2Fe-2S]-[ferredoxin] + S-adenosyl-L-homocysteine. In terms of biological role, specifically methylates position 2 of adenine 2503 in 23S rRNA and position 2 of adenine 37 in tRNAs. m2A2503 modification seems to play a crucial role in the proofreading step occurring at the peptidyl transferase center and thus would serve to optimize ribosomal fidelity. The polypeptide is Dual-specificity RNA methyltransferase RlmN (Haemophilus influenzae (strain PittEE)).